The chain runs to 260 residues: Tetraspanin-14 (260 aa).

Over methionine 1–asparagine 10 the chain is Cytoplasmic. A helical transmembrane segment spans residues leucine 11 to histidine 31. Over alanine 32–arginine 54 the chain is Extracellular. Residues valine 55–phenylalanine 75 traverse the membrane as a helical segment. The Cytoplasmic segment spans residues leucine 76 to arginine 80. Residues leucine 81–methionine 101 traverse the membrane as a helical segment. Over glutamate 102 to arginine 260 the chain is Extracellular. An N-linked (GlcNAc...) asparagine glycan is attached at asparagine 182.

Belongs to the tetraspanin (TM4SF) family.

It is found in the membrane. Its function is as follows. May be involved in the regulation of cell differentiation. This Arabidopsis thaliana (Mouse-ear cress) protein is Tetraspanin-14 (TET14).